We begin with the raw amino-acid sequence, 480 residues long: Phosphoglucosamine mutase (480 aa).

A disordered region spans residues methionine 1 to glutamine 41. Serine 127 acts as the Phosphoserine intermediate in catalysis. Mg(2+) is bound by residues serine 127, aspartate 269, aspartate 271, and aspartate 273. Position 127 is a phosphoserine (serine 127).

This sequence belongs to the phosphohexose mutase family. Requires Mg(2+) as cofactor. In terms of processing, activated by phosphorylation.

It catalyses the reaction alpha-D-glucosamine 1-phosphate = D-glucosamine 6-phosphate. Catalyzes the conversion of glucosamine-6-phosphate to glucosamine-1-phosphate. The protein is Phosphoglucosamine mutase of Sorangium cellulosum (strain So ce56) (Polyangium cellulosum (strain So ce56)).